We begin with the raw amino-acid sequence, 115 residues long: Probable prefoldin subunit 1 (115 aa).

The protein belongs to the prefoldin subunit beta family. As to quaternary structure, heterohexamer of two PFD-alpha type and four PFD-beta type subunits.

Its function is as follows. Binds specifically to cytosolic chaperonin (c-CPN) and transfers target proteins to it. Binds to nascent polypeptide chain and promotes folding in an environment in which there are many competing pathways for nonnative proteins. This Dictyostelium discoideum (Social amoeba) protein is Probable prefoldin subunit 1 (pfdn1).